Reading from the N-terminus, the 731-residue chain is Ubiquitin carboxyl-terminal hydrolase 17 (731 aa).

8 residues coordinate Zn(2+): C57, C60, C68, C71, C77, C81, H90, and C94. Residues 57–94 (CAVCLYPTTTRCSQCKSVRYCSSKCQILHWRRGHKEEC) form an MYND-type zinc finger. 2 disordered regions span residues 171–219 (YETR…DSAN) and 262–281 (LPSK…SGLK). Polar residues-rich tracts occupy residues 207-219 (GNQN…DSAN) and 265-281 (KANS…SGLK). Residues 329–633 (FGLVNLGNSC…GAYMLLYARD (305 aa)) enclose the USP domain. C338 acts as the Nucleophile in catalysis. H592 serves as the catalytic Proton acceptor. Residues 637 to 702 (PVSKNGGRKS…TSSCSTKDSS (66 aa)) form a disordered region. The segment covering 677–701 (DWSSGSLSSMFSSSDTTSSCSTKDS) has biased composition (low complexity).

Belongs to the peptidase C19 family.

It catalyses the reaction Thiol-dependent hydrolysis of ester, thioester, amide, peptide and isopeptide bonds formed by the C-terminal Gly of ubiquitin (a 76-residue protein attached to proteins as an intracellular targeting signal).. Functionally, recognizes and hydrolyzes the peptide bond at the C-terminal Gly of ubiquitin. Involved in the processing of poly-ubiquitin precursors as well as that of ubiquitinated proteins. This is Ubiquitin carboxyl-terminal hydrolase 17 (UBP17) from Arabidopsis thaliana (Mouse-ear cress).